We begin with the raw amino-acid sequence, 159 residues long: Nascent polypeptide-associated complex subunit beta (159 aa).

2 disordered regions span residues 1 to 39 (MDME…GMDD) and 121 to 159 (ESYQ…DKVE). A compositionally biased stretch (basic residues) spans 23–32 (TPRRKVKNVH). The NAC-A/B domain occupies 36 to 101 (GMDDKKLQTS…GEDKELTELV (66 aa)). Positions 136-153 (KDDDEDDDDIPDLVEGEN) are enriched in acidic residues.

This sequence belongs to the NAC-beta family. In terms of assembly, part of the nascent polypeptide-associated complex (NAC), consisting of EGD2 and EGD1. NAC associates with ribosomes via EGD1.

It localises to the cytoplasm. The protein localises to the nucleus. Its function is as follows. Component of the nascent polypeptide-associated complex (NAC), a dynamic component of the ribosomal exit tunnel, protecting the emerging polypeptides from interaction with other cytoplasmic proteins to ensure appropriate nascent protein targeting. The NAC complex also promotes mitochondrial protein import by enhancing productive ribosome interactions with the outer mitochondrial membrane and blocks the inappropriate interaction of ribosomes translating non-secretory nascent polypeptides with translocation sites in the membrane of the endoplasmic reticulum. EGD1 may act as a transcription factor that exert a negative effect on the expression of several genes that are transcribed by RNA polymerase II. The protein is Nascent polypeptide-associated complex subunit beta (egd1) of Botryotinia fuckeliana (strain B05.10) (Noble rot fungus).